A 413-amino-acid chain; its full sequence is MKIYLVGGAVRDALLGLPVKDKDWVVVGATPQEMLDAGYQQVGRDFPVFLHPQTHEEYALARTERKSGSGYTGFTCYAAPDVTLEADLQRRDLTINALARDDDGQIIDPYHGRRDLEARLLRHVSPAFGEDPLRVLRVARFAARYAHLSFRIADETLTLMREMTAAGELEHLTPERVWKETENALTTRNPQVYFQVLRDCGALRVLFPEIDALFGVPAPAKWHPEIDTGVHTLMTLSMAAMLSPQLDVRFATLCHDVGKGLTPKNLWPRHHGHGPVGVKLVEQLCQRLRVPNDLRDLAKLVAAYHDLIHTFPILQPKTIVKLFDAIDAWRKPQRVEQIALTSEADVRGRTGFEASDYPQGRWLREAWQVAQAVPTKEVVEAGFKGIEIREELTKRRIAAVANWKEKRCPNPAS.

ATP is bound by residues Gly8 and Arg11. Positions 8 and 11 each coordinate CTP. Mg(2+) contacts are provided by Asp21 and Asp23. ATP contacts are provided by Arg91, Arg137, and Arg140. CTP-binding residues include Arg91, Arg137, and Arg140. The 102-residue stretch at 228-329 (TGVHTLMTLS…VKLFDAIDAW (102 aa)) folds into the HD domain.

This sequence belongs to the tRNA nucleotidyltransferase/poly(A) polymerase family. Bacterial CCA-adding enzyme type 1 subfamily. Monomer. Can also form homodimers and oligomers. Mg(2+) is required as a cofactor. Ni(2+) serves as cofactor.

It carries out the reaction a tRNA precursor + 2 CTP + ATP = a tRNA with a 3' CCA end + 3 diphosphate. The catalysed reaction is a tRNA with a 3' CCA end + 2 CTP + ATP = a tRNA with a 3' CCACCA end + 3 diphosphate. Catalyzes the addition and repair of the essential 3'-terminal CCA sequence in tRNAs without using a nucleic acid template. Adds these three nucleotides in the order of C, C, and A to the tRNA nucleotide-73, using CTP and ATP as substrates and producing inorganic pyrophosphate. tRNA 3'-terminal CCA addition is required both for tRNA processing and repair. Also involved in tRNA surveillance by mediating tandem CCA addition to generate a CCACCA at the 3' terminus of unstable tRNAs. While stable tRNAs receive only 3'-terminal CCA, unstable tRNAs are marked with CCACCA and rapidly degraded. The protein is Multifunctional CCA protein of Salmonella typhi.